Consider the following 449-residue polypeptide: UDP-N-acetylmuramate--L-alanine ligase (449 aa).

Position 121-127 (121-127 (GAHGKSS)) interacts with ATP.

The protein belongs to the MurCDEF family.

The protein resides in the cytoplasm. It catalyses the reaction UDP-N-acetyl-alpha-D-muramate + L-alanine + ATP = UDP-N-acetyl-alpha-D-muramoyl-L-alanine + ADP + phosphate + H(+). It functions in the pathway cell wall biogenesis; peptidoglycan biosynthesis. Its function is as follows. Cell wall formation. In Helicobacter pylori (strain J99 / ATCC 700824) (Campylobacter pylori J99), this protein is UDP-N-acetylmuramate--L-alanine ligase.